Consider the following 340-residue polypeptide: CMP-sialic acid transporter 1 (340 aa).

Topologically, residues 1 to 5 (MAATP) are cytoplasmic. Residues 6-26 (WYFVAVLLTILTSSQGILTTL) traverse the membrane as a helical segment. Topologically, residues 27-36 (SQSDGGYKYD) are lumenal. A helical membrane pass occupies residues 37–57 (YATVPFLAEVFKLIISGLFLW). The Cytoplasmic segment spans residues 58-78 (REMRTSSSTTSRITTDWKSVR). The helical transmembrane segment at 79–99 (LFVIPSLIYLIHNNVQFATLT) threads the bilayer. Residues 100–102 (YVD) are Lumenal-facing. A helical membrane pass occupies residues 103–125 (TSTYQIMGNLKIVTTGILFRLFL). The Cytoplasmic portion of the chain corresponds to 126–168 (KRKLSKLQWMAIGLLAVGTTTSQVKGCGEASCDSLFTAPIQGY). The chain crosses the membrane as a helical span at residues 169-189 (LLGILSAGLSALAGIYTEFLM). The Lumenal portion of the chain corresponds to 190 to 200 (KRNNDTLYWQN). A helical membrane pass occupies residues 201 to 217 (LQLYTFGSLFNVARLIA). Residues 218-238 (DDFRHGFEKGPWWQRIFDGYS) lie on the Cytoplasmic side of the membrane. Residues 239-259 (ITTWLVVLNLGSTGLLVSWLM) form a helical membrane-spanning segment. The Lumenal segment spans residues 260-282 (KYADNIVKVYSTSMAMLLTMVAS). Residues 283–303 (IYLFSFKPTLQLFLGIVICIM) form a helical membrane-spanning segment. Residues 304–340 (SLHMYFAPPHTLVDLPVTNEAHAKTLKQVVVEEKTDS) are Cytoplasmic-facing.

It belongs to the nucleotide-sugar transporter family. CMP-Sialate:CMP antiporter (TC 2.A.7.12) subfamily.

The protein resides in the golgi apparatus membrane. In terms of biological role, essential protein. Sugar transporter involved in the transport of CMP-sialic acid from the cytoplasm into the Golgi. The chain is CMP-sialic acid transporter 1 from Arabidopsis thaliana (Mouse-ear cress).